The following is a 444-amino-acid chain: Probable polygalacturonase At1g80170 (444 aa).

Residues 1-28 (MSYSRGGTLVTLLLLLVVASSLALTANA) form the signal peptide. 6 PbH1 repeats span residues 208–234 (CRRVTISGLKVIAPATSPNTDGIHISV), 235–256 (SRGIVIDNTTVSTGDDCISIVK), 258–278 (STQISISNIICGPGHGISIGS), 288–309 (VRDITVDTAIISDTANGVRIKT), 317–338 (VSKIIFRNIKMNNVSNPIIIDQ), and 351–378 (TSAISIENISFVHVRGTSASKEAIKISC). Catalysis depends on Asp249, which acts as the Proton donor. The active site involves His272.

It belongs to the glycosyl hydrolase 28 family. In terms of tissue distribution, expressed in young, mature and dehiscing anthers. Found in stems, but not in roots or in abscission zone of floral organs.

The protein resides in the secreted. The protein localises to the cell wall. It catalyses the reaction (1,4-alpha-D-galacturonosyl)n+m + H2O = (1,4-alpha-D-galacturonosyl)n + (1,4-alpha-D-galacturonosyl)m.. The chain is Probable polygalacturonase At1g80170 from Arabidopsis thaliana (Mouse-ear cress).